A 112-amino-acid chain; its full sequence is MISLRVLLVILWLQLSWVWSQRKEVEQDPGPFNVPEGATVAFNCTYSNSASQSFFWYRQDCRKEPKLLMSVYSSGNEDGRFTAQLNRASQYISLLIRDSKLSDSATYLCVVN.

A signal peptide spans 1–20 (MISLRVLLVILWLQLSWVWS). The Ig-like domain occupies 23-112 (KEVEQDPGPF…DSATYLCVVN (90 aa)). Asn-43 carries an N-linked (GlcNAc...) asparagine glycan. Cys-44 and Cys-109 are disulfide-bonded.

In terms of assembly, alpha-beta TR is a heterodimer composed of an alpha and beta chain; disulfide-linked. The alpha-beta TR is associated with the transmembrane signaling CD3 coreceptor proteins to form the TR-CD3 (TcR or TCR). The assembly of alpha-beta TR heterodimers with CD3 occurs in the endoplasmic reticulum where a single alpha-beta TR heterodimer associates with one CD3D-CD3E heterodimer, one CD3G-CD3E heterodimer and one CD247 homodimer forming a stable octameric structure. CD3D-CD3E and CD3G-CD3E heterodimers preferentially associate with TR alpha and TR beta chains, respectively. The association of the CD247 homodimer is the last step of TcR assembly in the endoplasmic reticulum and is required for transport to the cell surface.

The protein resides in the cell membrane. V region of the variable domain of T cell receptor (TR) alpha chain that participates in the antigen recognition. Alpha-beta T cell receptors are antigen specific receptors which are essential to the immune response and are present on the cell surface of T lymphocytes. Recognize peptide-major histocompatibility (MH) (pMH) complexes that are displayed by antigen presenting cells (APC), a prerequisite for efficient T cell adaptive immunity against pathogens. Binding of alpha-beta TR to pMH complex initiates TR-CD3 clustering on the cell surface and intracellular activation of LCK that phosphorylates the ITAM motifs of CD3G, CD3D, CD3E and CD247 enabling the recruitment of ZAP70. In turn ZAP70 phosphorylates LAT, which recruits numerous signaling molecules to form the LAT signalosome. The LAT signalosome propagates signal branching to three major signaling pathways, the calcium, the mitogen-activated protein kinase (MAPK) kinase and the nuclear factor NF-kappa-B (NF-kB) pathways, leading to the mobilization of transcription factors that are critical for gene expression and essential for T cell growth and differentiation. The T cell repertoire is generated in the thymus, by V-(D)-J rearrangement. This repertoire is then shaped by intrathymic selection events to generate a peripheral T cell pool of self-MH restricted, non-autoaggressive T cells. Post-thymic interaction of alpha-beta TR with the pMH complexes shapes TR structural and functional avidity. The chain is T cell receptor alpha variable 12-1 from Homo sapiens (Human).